A 247-amino-acid chain; its full sequence is RNA-free ribonuclease P (247 aa).

Positions 223 to 247 (SPEGEKEKGEADKKKKSHSEEAEFI) are disordered.

Belongs to the HARP family.

It carries out the reaction Endonucleolytic cleavage of RNA, removing 5'-extranucleotides from tRNA precursor.. In terms of biological role, RNA-free RNase P that catalyzes the removal of the 5'-leader sequence from pre-tRNA to produce the mature 5'-terminus. In Methanosarcina acetivorans (strain ATCC 35395 / DSM 2834 / JCM 12185 / C2A), this protein is RNA-free ribonuclease P.